A 486-amino-acid polypeptide reads, in one-letter code: GTPase Obg (486 aa).

Positions S2 to V159 constitute an Obg domain. Residues A160–A340 enclose the OBG-type G domain. GTP-binding positions include G166 to S173, F191 to V195, D212 to G215, N292 to D295, and S321 to V323. The Mg(2+) site is built by S173 and T193. One can recognise an OCT domain in the interval P358 to P438. Residues R462–Q486 form a disordered region.

It belongs to the TRAFAC class OBG-HflX-like GTPase superfamily. OBG GTPase family. Monomer. Requires Mg(2+) as cofactor.

The protein localises to the cytoplasm. Functionally, an essential GTPase which binds GTP, GDP and possibly (p)ppGpp with moderate affinity, with high nucleotide exchange rates and a fairly low GTP hydrolysis rate. Plays a role in control of the cell cycle, stress response, ribosome biogenesis and in those bacteria that undergo differentiation, in morphogenesis control. The protein is GTPase Obg of Rhodococcus jostii (strain RHA1).